Here is a 595-residue protein sequence, read N- to C-terminus: Probable carotenoid cleavage dioxygenase 4, chloroplastic (595 aa).

Residues 1–34 (MDSVSSSSFLSSTFSLHHSLLRRRSSSPTLLRIN) constitute a chloroplast transit peptide. A disordered region spans residues 41–74 (RSPITNPSDNNDRRNKPKTLHNRTNHTLVSSPPK). A compositionally biased stretch (basic residues) spans 55-64 (NKPKTLHNRT). Fe cation is bound by residues His287, His336, His404, and His583.

Belongs to the carotenoid oxygenase family. Interacts with VAR3. Interacts with PGM48. Requires Fe(2+) as cofactor. Mostly expressed in flowers (e.g. sepals and petals), siliques, seeds, leaves and cotyledons.

The protein resides in the plastid. Its subcellular location is the chloroplast. The protein localises to the plastoglobule. Its function is as follows. May be involved in carotenoid cleavage. The protein is Probable carotenoid cleavage dioxygenase 4, chloroplastic (CCD4) of Arabidopsis thaliana (Mouse-ear cress).